Reading from the N-terminus, the 413-residue chain is Serine/threonine-protein kinase ppk27 (413 aa).

Residues 102 to 403 (WSINTKITST…LKDFNKHGNF (302 aa)) enclose the Protein kinase domain. Residues 108 to 116 (ITSTEQREV) and Lys-133 each bind ATP. The active-site Proton acceptor is Asp-231.

It belongs to the protein kinase superfamily. Ser/Thr protein kinase family.

It is found in the cytoplasm. The enzyme catalyses L-seryl-[protein] + ATP = O-phospho-L-seryl-[protein] + ADP + H(+). It carries out the reaction L-threonyl-[protein] + ATP = O-phospho-L-threonyl-[protein] + ADP + H(+). The protein is Serine/threonine-protein kinase ppk27 (ppk27) of Schizosaccharomyces pombe (strain 972 / ATCC 24843) (Fission yeast).